Reading from the N-terminus, the 445-residue chain is Phosphoglucosamine mutase (445 aa).

The Phosphoserine intermediate role is filled by serine 101. Residues serine 101, aspartate 240, aspartate 242, and aspartate 244 each contribute to the Mg(2+) site. Serine 101 carries the phosphoserine modification.

It belongs to the phosphohexose mutase family. The cofactor is Mg(2+). Post-translationally, activated by phosphorylation.

It catalyses the reaction alpha-D-glucosamine 1-phosphate = D-glucosamine 6-phosphate. Functionally, catalyzes the conversion of glucosamine-6-phosphate to glucosamine-1-phosphate. The protein is Phosphoglucosamine mutase of Azotobacter vinelandii (strain DJ / ATCC BAA-1303).